Reading from the N-terminus, the 134-residue chain is Early E3B 14.5 kDa protein (134 aa).

Positions 1-21 are cleaved as a signal peptide; that stretch reads MQAMLPVILILLLPCIPLAST. The helical transmembrane segment at 54–78 threads the bilayer; sequence YWIVIVGIINILSCTFFSITIYPTF.

This sequence belongs to the adenoviridae E3_14 family. Phosphorylated on serine; O-glycosylated, but not N-glycosylated.

It is found in the host membrane. Functionally, down-regulates the EGF receptor and prevents cytolysis by TNF. The chain is Early E3B 14.5 kDa protein from Homo sapiens (Human).